Consider the following 246-residue polypeptide: tRNA pseudouridine synthase A (246 aa).

The Nucleophile role is filled by D52. Y111 is a substrate binding site.

It belongs to the tRNA pseudouridine synthase TruA family. In terms of assembly, homodimer.

The catalysed reaction is uridine(38/39/40) in tRNA = pseudouridine(38/39/40) in tRNA. Formation of pseudouridine at positions 38, 39 and 40 in the anticodon stem and loop of transfer RNAs. The polypeptide is tRNA pseudouridine synthase A (Borreliella burgdorferi (strain ZS7) (Borrelia burgdorferi)).